The sequence spans 292 residues: 11-beta-hydroxysteroid dehydrogenase 1 (292 aa).

The Cytoplasmic segment spans residues 1-7 (MAFMKKY). The chain crosses the membrane as a helical; Signal-anchor for type II membrane protein span at residues 8 to 24 (LLPILGLFMAYYYYSAN). Topologically, residues 25–292 (EEFRPEMLQG…SYNMDRFINK (268 aa)) are lumenal. Residues 41 to 67 (GASK…TARS), 92 to 93 (TM), and 119 to 121 (NHI) contribute to the NADP(+) site. Asn123 and Asn162 each carry an N-linked (GlcNAc...) asparagine glycan. Ser170 contacts substrate. Tyr183 acts as the Proton acceptor in catalysis. 183-187 (YSASK) is a binding site for NADP(+). Asn207 is a glycosylation site (N-linked (GlcNAc...) asparagine). An NADP(+)-binding site is contributed by 218-222 (IDTET).

Belongs to the short-chain dehydrogenases/reductases (SDR) family. Homodimer. In terms of processing, glycosylated. As to expression, widely expressed, highest expression in liver, lower in testis, ovary, lung, foreskin fibroblasts, and much lower in kidney. Expressed in liver (at protein level). Expressed in the basal cells of the corneal epithelium and in the ciliary nonpigmented epithelium (both at mRNA and at protein level).

The protein resides in the endoplasmic reticulum membrane. It catalyses the reaction an 11beta-hydroxysteroid + NADP(+) = an 11-oxosteroid + NADPH + H(+). It carries out the reaction cortisone + NADPH + H(+) = cortisol + NADP(+). The enzyme catalyses corticosterone + NADP(+) = 11-dehydrocorticosterone + NADPH + H(+). The catalysed reaction is a 7beta-hydroxysteroid + NADP(+) = a 7-oxosteroid + NADPH + H(+). It catalyses the reaction 7-oxocholesterol + NADPH + H(+) = 7beta-hydroxycholesterol + NADP(+). It carries out the reaction chenodeoxycholate + NADP(+) = 7-oxolithocholate + NADPH + H(+). The enzyme catalyses 7-oxolithocholate + NADPH + H(+) = ursodeoxycholate + NADP(+). The catalysed reaction is glycochenodeoxycholate + NADP(+) = 7-oxoglycolithocholate + NADPH + H(+). It catalyses the reaction taurochenodeoxycholate + NADP(+) = 7-oxotaurolithocholate + NADPH + H(+). It carries out the reaction tauroursodeoxycholate + NADP(+) = 7-oxotaurolithocholate + NADPH + H(+). The enzyme catalyses glycoursodeoxycholate + NADP(+) = 7-oxoglycolithocholate + NADPH + H(+). The catalysed reaction is 7-oxopregnenolone + NADPH + H(+) = 7beta-hydroxypregnenolone + NADP(+). It catalyses the reaction 3beta,7alpha-dihydroxyandrost-5-en-17-one + NADP(+) = 3beta-hydroxy-5-androstene-7,17-dione + NADPH + H(+). It carries out the reaction 3beta-hydroxy-5-androstene-7,17-dione + NADPH + H(+) = 3beta,7beta-dihydroxyandrost-5-en-17-one + NADP(+). The enzyme catalyses 3beta-hydroxy-5alpha-androstane-7,17-dione + NADPH + H(+) = 3beta,7beta-dihydroxy-5alpha-androstan-17-one + NADP(+). It participates in steroid metabolism. With respect to regulation, hexose-6-phosphate dehydrogenase (H6PD) provides cosubstrate NADPH, and the glucose-6-phosphate transporter in the ER-membrane supplies the substrate for H6PDH, their activities stimulate the reduction of cortisone and abolish the oxidation of cortisol. Functionally, controls the reversible conversion of biologically active glucocorticoids such as cortisone to cortisol, and 11-dehydrocorticosterone to corticosterone in the presence of NADP(H). Participates in the corticosteroid receptor-mediated anti-inflammatory response, as well as metabolic and homeostatic processes. Plays a role in the secretion of aqueous humor in the eye, maintaining a normotensive, intraocular environment. Bidirectional in vitro, predominantly functions as a reductase in vivo, thereby increasing the concentration of active glucocorticoids. It has broad substrate specificity, besides glucocorticoids, it accepts other steroid and sterol substrates. Interconverts 7-oxo- and 7-hydroxy-neurosteroids such as 7-oxopregnenolone and 7beta-hydroxypregnenolone, 7-oxodehydroepiandrosterone (3beta-hydroxy-5-androstene-7,17-dione) and 7beta-hydroxydehydroepiandrosterone (3beta,7beta-dihydroxyandrost-5-en-17-one), among others. Catalyzes the stereo-specific conversion of the major dietary oxysterol, 7-ketocholesterol (7-oxocholesterol), into the more polar 7-beta-hydroxycholesterol metabolite. 7-oxocholesterol is one of the most important oxysterols, it participates in several events such as induction of apoptosis, accumulation in atherosclerotic lesions, lipid peroxidation, and induction of foam cell formation. Mediates the 7-oxo reduction of 7-oxolithocholate mainly to chenodeoxycholate, and to a lesser extent to ursodeoxycholate, both in its free form and when conjugated to glycine or taurine, providing a link between glucocorticoid activation and bile acid metabolism. Catalyzes the synthesis of 7-beta-25-dihydroxycholesterol from 7-oxo-25-hydroxycholesterol in vitro, which acts as a ligand for the G-protein-coupled receptor (GPCR) Epstein-Barr virus-induced gene 2 (EBI2) and may thereby regulate immune cell migration. The protein is 11-beta-hydroxysteroid dehydrogenase 1 of Homo sapiens (Human).